Consider the following 384-residue polypeptide: 4-hydroxy-3-methylbut-2-en-1-yl diphosphate synthase (flavodoxin) (384 aa).

Cysteine 280, cysteine 283, cysteine 315, and glutamate 322 together coordinate [4Fe-4S] cluster.

The protein belongs to the IspG family. [4Fe-4S] cluster is required as a cofactor.

It catalyses the reaction (2E)-4-hydroxy-3-methylbut-2-enyl diphosphate + oxidized [flavodoxin] + H2O + 2 H(+) = 2-C-methyl-D-erythritol 2,4-cyclic diphosphate + reduced [flavodoxin]. Its pathway is isoprenoid biosynthesis; isopentenyl diphosphate biosynthesis via DXP pathway; isopentenyl diphosphate from 1-deoxy-D-xylulose 5-phosphate: step 5/6. Converts 2C-methyl-D-erythritol 2,4-cyclodiphosphate (ME-2,4cPP) into 1-hydroxy-2-methyl-2-(E)-butenyl 4-diphosphate. The sequence is that of 4-hydroxy-3-methylbut-2-en-1-yl diphosphate synthase (flavodoxin) from Parafrankia sp. (strain EAN1pec).